The following is a 601-amino-acid chain: Elongation factor 4 (601 aa).

Residues 6–188 (SRTRNFSIIA…DIVKNVPPPK (183 aa)) enclose the tr-type G domain. GTP contacts are provided by residues 18–23 (DHGKST) and 135–138 (NKID).

Belongs to the TRAFAC class translation factor GTPase superfamily. Classic translation factor GTPase family. LepA subfamily.

It is found in the cell membrane. The catalysed reaction is GTP + H2O = GDP + phosphate + H(+). Functionally, required for accurate and efficient protein synthesis under certain stress conditions. May act as a fidelity factor of the translation reaction, by catalyzing a one-codon backward translocation of tRNAs on improperly translocated ribosomes. Back-translocation proceeds from a post-translocation (POST) complex to a pre-translocation (PRE) complex, thus giving elongation factor G a second chance to translocate the tRNAs correctly. Binds to ribosomes in a GTP-dependent manner. This Clostridioides difficile (strain 630) (Peptoclostridium difficile) protein is Elongation factor 4.